A 487-amino-acid chain; its full sequence is Cysteine--tRNA ligase (487 aa).

Cys27 contacts Zn(2+). The 'HIGH' region signature appears at 29 to 39; sequence ATVQGLPHVGH. Positions 174–194 are disordered; that stretch reads IDDMQGAPDADPRGKKDPRDF. Residues 183-194 are compositionally biased toward basic and acidic residues; that stretch reads ADPRGKKDPRDF. Zn(2+) is bound by residues Cys225, His250, and Glu254. The short motif at 281-285 is the 'KMSKS' region element; the sequence is KMSKS. Lys284 is an ATP binding site.

Belongs to the class-I aminoacyl-tRNA synthetase family. As to quaternary structure, monomer. Requires Zn(2+) as cofactor.

The protein resides in the cytoplasm. The catalysed reaction is tRNA(Cys) + L-cysteine + ATP = L-cysteinyl-tRNA(Cys) + AMP + diphosphate. In Arthrobacter sp. (strain FB24), this protein is Cysteine--tRNA ligase.